A 333-amino-acid polypeptide reads, in one-letter code: DNA-directed RNA polymerase subunit alpha (333 aa).

Positions 1–233 (MVQEKLRFST…DLFIPFLHAE (233 aa)) are alpha N-terminal domain (alpha-NTD). The segment at 266-333 (KKEIALKSIF…DILKIQKYFT (68 aa)) is alpha C-terminal domain (alpha-CTD).

Belongs to the RNA polymerase alpha chain family. In plastids the minimal PEP RNA polymerase catalytic core is composed of four subunits: alpha, beta, beta', and beta''. When a (nuclear-encoded) sigma factor is associated with the core the holoenzyme is formed, which can initiate transcription.

The protein resides in the plastid. The protein localises to the chloroplast. It catalyses the reaction RNA(n) + a ribonucleoside 5'-triphosphate = RNA(n+1) + diphosphate. DNA-dependent RNA polymerase catalyzes the transcription of DNA into RNA using the four ribonucleoside triphosphates as substrates. In Phaseolus angularis (Azuki bean), this protein is DNA-directed RNA polymerase subunit alpha.